The sequence spans 294 residues: Glycine N-acyltransferase-like protein 2 (294 aa).

At K19 the chain carries N6-acetyllysine.

Belongs to the glycine N-acyltransferase family. In terms of processing, acetylation at Lys-19 drastically decreases the production of N-oleoyl and N-arachidonoyl glycines. As to expression, expressed at highest levels in salivary gland and trachea. Also detected in thyroid gland, spinal cord, prostate, lung and fetal brain.

It localises to the endoplasmic reticulum. The catalysed reaction is an acyl-CoA + glycine = an N-acylglycine + CoA + H(+). It carries out the reaction (9Z)-hexadecenoyl-CoA + glycine = N-(9Z-hexadecenoyl)-glycine + CoA + H(+). The enzyme catalyses octadecanoyl-CoA + glycine = N-octadecanoylglycine + CoA + H(+). It catalyses the reaction (5Z,8Z,11Z,14Z)-eicosatetraenoyl-CoA + glycine = N-(5Z,8Z,11Z,14Z)-eicosatetraenoyl-glycine + CoA + H(+). The catalysed reaction is (9Z)-octadecenoyl-CoA + glycine = N-(9Z-octadecenoyl)glycine + CoA + H(+). It carries out the reaction octanoyl-CoA + glycine = N-octanoylglycine + CoA + H(+). The enzyme catalyses decanoyl-CoA + glycine = N-decanoylglycine + CoA + H(+). It catalyses the reaction tetradecanoyl-CoA + glycine = N-tetradecanoylglycine + CoA + H(+). The catalysed reaction is dodecanoyl-CoA + glycine = N-dodecanoylglycine + CoA + H(+). It carries out the reaction (9Z,12Z)-octadecadienoyl-CoA + glycine = N-(9Z,12Z-octadecadienoyl)-glycine + CoA + H(+). The enzyme catalyses a fatty acyl-CoA + glycine = an N-(fatty acyl)-glycine + CoA + H(+). Functionally, mitochondrial acyltransferase which transfers the acyl group to the N-terminus of glycine. Conjugates numerous substrates, such as arachidonoyl-CoA and saturated medium and long-chain acyl-CoAs ranging from chain-length C8:0-CoA to C18:0-CoA, to form a variety of N-acylglycines. Shows a preference for monounsaturated fatty acid oleoyl-CoA (C18:1-CoA) as an acyl donor. Does not exhibit any activity toward C22:6-CoA and chenodeoxycholoyl-CoA, nor toward serine or alanine. The polypeptide is Glycine N-acyltransferase-like protein 2 (Homo sapiens (Human)).